We begin with the raw amino-acid sequence, 233 residues long: Ribosome maturation factor RimM (233 aa).

The segment at 1–51 (MKRKQDSKGAGSRGQGAGEKKQGAGGRGQGEKKQKKSPVPSPQSPVPDPDE) is disordered. The span at 11 to 28 (GSRGQGAGEKKQGAGGRG) shows a compositional bias: gly residues. Residues 145–226 (GEDEYHVVDL…RIEITPPPGL (82 aa)) enclose the PRC barrel domain.

This sequence belongs to the RimM family. In terms of assembly, binds ribosomal protein uS19.

It localises to the cytoplasm. Functionally, an accessory protein needed during the final step in the assembly of 30S ribosomal subunit, possibly for assembly of the head region. Essential for efficient processing of 16S rRNA. May be needed both before and after RbfA during the maturation of 16S rRNA. It has affinity for free ribosomal 30S subunits but not for 70S ribosomes. The sequence is that of Ribosome maturation factor RimM from Trichormus variabilis (strain ATCC 29413 / PCC 7937) (Anabaena variabilis).